Reading from the N-terminus, the 388-residue chain is DNA replication and repair protein RecF (388 aa).

30-37 (GANGNGKT) contributes to the ATP binding site.

It belongs to the RecF family.

Its subcellular location is the cytoplasm. Its function is as follows. The RecF protein is involved in DNA metabolism; it is required for DNA replication and normal SOS inducibility. RecF binds preferentially to single-stranded, linear DNA. It also seems to bind ATP. The sequence is that of DNA replication and repair protein RecF from Nocardia farcinica (strain IFM 10152).